Here is a 369-residue protein sequence, read N- to C-terminus: Maltose/maltodextrin import ATP-binding protein MalK (369 aa).

The 231-residue stretch at 4-234 (VQLRNVTKAW…PADRFVAGFI (231 aa)) folds into the ABC transporter domain. An ATP-binding site is contributed by 36–43 (GPSGCGKS).

It belongs to the ABC transporter superfamily. Maltooligosaccharide importer (TC 3.A.1.1.1) family. In terms of assembly, the complex is composed of two ATP-binding proteins (MalK), two transmembrane proteins (MalG and MalK) and a solute-binding protein (MalE).

The protein localises to the cell inner membrane. The enzyme catalyses D-maltose(out) + ATP + H2O = D-maltose(in) + ADP + phosphate + H(+). Functionally, part of the ABC transporter complex MalEFGK involved in maltose/maltodextrin import. Responsible for energy coupling to the transport system. The sequence is that of Maltose/maltodextrin import ATP-binding protein MalK from Salmonella typhi.